Reading from the N-terminus, the 496-residue chain is UDP-N-acetylmuramoyl-L-alanyl-D-glutamate--2,6-diaminopimelate ligase (496 aa).

UDP-N-acetyl-alpha-D-muramoyl-L-alanyl-D-glutamate is bound at residue serine 32. Position 116–122 (116–122) interacts with ATP; sequence GTNGKTT. UDP-N-acetyl-alpha-D-muramoyl-L-alanyl-D-glutamate is bound by residues 158–159, serine 185, glutamine 191, and arginine 193; that span reads TT. The residue at position 225 (lysine 225) is an N6-carboxylysine. Meso-2,6-diaminopimelate is bound by residues arginine 389, 413–416, glycine 464, and glutamate 468; that span reads DNPR. The Meso-diaminopimelate recognition motif signature appears at 413 to 416; the sequence is DNPR.

The protein belongs to the MurCDEF family. MurE subfamily. Requires Mg(2+) as cofactor. Carboxylation is probably crucial for Mg(2+) binding and, consequently, for the gamma-phosphate positioning of ATP.

It localises to the cytoplasm. The enzyme catalyses UDP-N-acetyl-alpha-D-muramoyl-L-alanyl-D-glutamate + meso-2,6-diaminopimelate + ATP = UDP-N-acetyl-alpha-D-muramoyl-L-alanyl-gamma-D-glutamyl-meso-2,6-diaminopimelate + ADP + phosphate + H(+). It participates in cell wall biogenesis; peptidoglycan biosynthesis. Catalyzes the addition of meso-diaminopimelic acid to the nucleotide precursor UDP-N-acetylmuramoyl-L-alanyl-D-glutamate (UMAG) in the biosynthesis of bacterial cell-wall peptidoglycan. This Trichormus variabilis (strain ATCC 29413 / PCC 7937) (Anabaena variabilis) protein is UDP-N-acetylmuramoyl-L-alanyl-D-glutamate--2,6-diaminopimelate ligase.